A 306-amino-acid polypeptide reads, in one-letter code: Type 2A encapsulin shell protein SrpI (306 aa).

This sequence belongs to the encapsulin family. Family 2A subfamily. In terms of assembly, the 24.5 nm encapsulin nanocompartment is formed by 60 subunits; monomers form pentamers which assemble to form shells. There are 12 positively charged pores where the pentamers meet with a minimal pore diameter of 3.7 Angstroms as well 3-fold axis channels and dimer channels.

It localises to the encapsulin nanocompartment. Shell component of a type 2A encapsulin nanocompartment. Expression in E.coli generates nanocompartments with an average diameter of 25 nm. They can be disassembled by treatment with 6M guanidine hydrochloride and reassembled with cargo. The nanocompartment is probably involved in sulfur metabolism. Probably allows passage of cysteine into its interior; during growth in light the physiological pH is 8-8.4, about 30-54% of free cysteine (charge -1) would be able to pass through the shell. The sequence is that of Type 2A encapsulin shell protein SrpI from Synechococcus elongatus (strain ATCC 33912 / PCC 7942 / FACHB-805) (Anacystis nidulans R2).